A 297-amino-acid chain; its full sequence is Cell division protein ZipA (297 aa).

Residue methionine 1 is a topological domain, periplasmic. A helical transmembrane segment spans residues 2–22 (EIGLREWLILIGIIVIAGILF). Residues 23 to 297 (DGWRRMRGGK…FERRALTQKR (275 aa)) lie on the Cytoplasmic side of the membrane. The tract at residues 48–150 (DEEGGSAEVL…GAAPASSSVK (103 aa)) is disordered. Basic and acidic residues predominate over residues 83 to 92 (ARDREREPKP). Residues 124-133 (LFADSDDDFA) show a composition bias toward acidic residues. A compositionally biased stretch (polar residues) spans 136–149 (NNRSSGAAPASSSV).

Belongs to the ZipA family. As to quaternary structure, interacts with FtsZ via their C-terminal domains.

The protein resides in the cell inner membrane. Essential cell division protein that stabilizes the FtsZ protofilaments by cross-linking them and that serves as a cytoplasmic membrane anchor for the Z ring. Also required for the recruitment to the septal ring of downstream cell division proteins. This Pseudomonas putida (strain ATCC 700007 / DSM 6899 / JCM 31910 / BCRC 17059 / LMG 24140 / F1) protein is Cell division protein ZipA.